We begin with the raw amino-acid sequence, 115 residues long: Large ribosomal subunit protein bL20 (115 aa).

The protein belongs to the bacterial ribosomal protein bL20 family.

Binds directly to 23S ribosomal RNA and is necessary for the in vitro assembly process of the 50S ribosomal subunit. It is not involved in the protein synthesizing functions of that subunit. The protein is Large ribosomal subunit protein bL20 of Chlorobium phaeobacteroides (strain BS1).